A 172-amino-acid polypeptide reads, in one-letter code: Translationally-controlled tumor protein homolog (172 aa).

One can recognise a TCTP domain in the interval 1–172 (MIIYRDCISQ…FKDGLEMEKC (172 aa)).

This sequence belongs to the TCTP family. As to expression, expressed by the venom gland.

The protein localises to the secreted. Its function is as follows. Venom protein that causes edema, enhances vascular permeability and is likely related to the inflammatory activity of the venom. This Crotalus adamanteus (Eastern diamondback rattlesnake) protein is Translationally-controlled tumor protein homolog.